The chain runs to 343 residues: Ribosomal RNA small subunit methyltransferase C (343 aa).

Belongs to the methyltransferase superfamily. RsmC family. Monomer.

It localises to the cytoplasm. The catalysed reaction is guanosine(1207) in 16S rRNA + S-adenosyl-L-methionine = N(2)-methylguanosine(1207) in 16S rRNA + S-adenosyl-L-homocysteine + H(+). Its function is as follows. Specifically methylates the guanine in position 1207 of 16S rRNA in the 30S particle. In Escherichia coli (strain SMS-3-5 / SECEC), this protein is Ribosomal RNA small subunit methyltransferase C.